Consider the following 92-residue polypeptide: Defensin alpha 4 (92 aa).

The N-terminal stretch at 1–19 is a signal peptide; it reads MKTLVLLSALVLLAFQVQA. A propeptide spanning residues 20–58 is cleaved from the precursor; it reads DPIQNTDEETKTEEQPGEEDQAVSISFGGQEGSALHEKS. A disordered region spans residues 23 to 42; that stretch reads QNTDEETKTEEQPGEEDQAV. Intrachain disulfides connect Cys64–Cys89, Cys66–Cys81, and Cys71–Cys88.

This sequence belongs to the alpha-defensin family. Paneth cells of the small bowel.

Its subcellular location is the secreted. It localises to the cytoplasmic vesicle. The protein resides in the secretory vesicle. Host-defense peptide that has antimicrobial activity. Exhibits activity against Gram-negative E.coli (in vitro). Probably contributes to the antimicrobial barrier function of the small bowel mucosa. The chain is Defensin alpha 4 from Mus musculus (Mouse).